Here is a 258-residue protein sequence, read N- to C-terminus: Regulatory protein RecX (258 aa).

The protein belongs to the RecX family.

It is found in the cytoplasm. Its function is as follows. Modulates RecA activity. The chain is Regulatory protein RecX from Streptococcus sanguinis (strain SK36).